Here is a 1389-residue protein sequence, read N- to C-terminus: DNA-directed RNA polymerase subunit beta' (1389 aa).

Residues Cys-73, Cys-75, Cys-88, and Cys-91 each contribute to the Zn(2+) site. Asp-464, Asp-466, and Asp-468 together coordinate Mg(2+). Residues Cys-810, Cys-884, Cys-891, and Cys-894 each coordinate Zn(2+).

This sequence belongs to the RNA polymerase beta' chain family. As to quaternary structure, the RNAP catalytic core consists of 2 alpha, 1 beta, 1 beta' and 1 omega subunit. When a sigma factor is associated with the core the holoenzyme is formed, which can initiate transcription. Mg(2+) serves as cofactor. Zn(2+) is required as a cofactor.

The enzyme catalyses RNA(n) + a ribonucleoside 5'-triphosphate = RNA(n+1) + diphosphate. Its function is as follows. DNA-dependent RNA polymerase catalyzes the transcription of DNA into RNA using the four ribonucleoside triphosphates as substrates. The polypeptide is DNA-directed RNA polymerase subunit beta' (Pelagibacter ubique (strain HTCC1062)).